A 342-amino-acid chain; its full sequence is Dof zinc finger protein DOF4.6 (342 aa).

The segment at 21–54 (NTCPKPQPQPLQPQQPPSVGGERKARPEKDQAVN) is disordered. Residues 25-36 (KPQPQPLQPQQP) show a composition bias toward pro residues. The segment covering 41–51 (GERKARPEKDQ) has biased composition (basic and acidic residues). The Dof-type zinc-finger motif lies at 53–107 (VNCPRCNSTNTKFCYYNNYSLTQPRYFCKGCRRYWTEGGSLRNIPVGGGSRKNKR). Residues Cys55, Cys58, Cys80, and Cys83 each coordinate Zn(2+). Residues 94–136 (RNIPVGGGSRKNKRSHSSSSDISNNHSDSTQPATKKHLSDHHH) form a disordered region. The segment covering 110–122 (SSSSDISNNHSDS) has biased composition (low complexity). The segment covering 127 to 136 (TKKHLSDHHH) has biased composition (basic residues).

In terms of tissue distribution, accumulates in the stele.

Its subcellular location is the nucleus. In terms of biological role, transcription factor that binds specifically to a 5'-AA[AG]G-3' consensus core sequence. This is Dof zinc finger protein DOF4.6 from Arabidopsis thaliana (Mouse-ear cress).